We begin with the raw amino-acid sequence, 209 residues long: ADP-ribose pyrophosphatase (209 aa).

Residues 28–29 (FF), 51–52 (RE), Arg-56, and Arg-79 contribute to the substrate site. In terms of domain architecture, Nudix hydrolase spans 55–193 (ERGHAAVLLP…KIDNAASVIA (139 aa)). Ala-96 lines the Mg(2+) pocket. The Nudix box signature appears at 97–118 (GMIEEGESVEDVARREAIEEAG). Met-98 contributes to the substrate binding site. Mg(2+) is bound by residues Glu-112 and Glu-116. Residues 133 to 135 (SPG) and Glu-139 contribute to the substrate site. Glu-162 acts as the Proton acceptor in catalysis. Glu-164 contributes to the Mg(2+) binding site.

This sequence belongs to the Nudix hydrolase family. NudF subfamily. Homodimer. Requires Mg(2+) as cofactor.

It carries out the reaction ADP-D-ribose + H2O = D-ribose 5-phosphate + AMP + 2 H(+). Its activity is regulated as follows. Inhibited by phosphorylated compounds such as AMP, ADP, ATP, 3-phosphoglyceric acid and PPi. Not inhibited by orthophosphate. Activity is high in cells grown in low glucose concentrations and decreases dramatically as glucose concentration increases. Acts on ADP-mannose and ADP-glucose as well as ADP-ribose. Prevents glycogen biosynthesis. The reaction catalyzed by this enzyme is a limiting step of the gluconeogenic process. The chain is ADP-ribose pyrophosphatase (nudF) from Escherichia coli O157:H7.